We begin with the raw amino-acid sequence, 600 residues long: ATP-dependent lipid A-core flippase (600 aa).

5 helical membrane-spanning segments follow: residues 28–48 (IMAVLGLITYGAVDAAFIAFI), 80–100 (IMLMAPIAVILMFSLRGVANF), 182–202 (WKLSLCILVIGPIMGVVISVV), 267–287 (ISQPLIMVIGSFALAFVLYAA), and 295–315 (DLTAGTFAAILGAMLAMLQPI). One can recognise an ABC transmembrane type-1 domain in the interval 28–327 (IMAVLGLITY…LTRVNAEFQR (300 aa)). Residues 359 to 596 (LAFDNVTFAY…AGIYANLYQM (238 aa)) enclose the ABC transporter domain. Residue 393–400 (GRSGSGKS) coordinates ATP.

The protein belongs to the ABC transporter superfamily. Lipid exporter (TC 3.A.1.106) family. As to quaternary structure, homodimer.

Its subcellular location is the cell inner membrane. It carries out the reaction ATP + H2O + lipid A-core oligosaccharideSide 1 = ADP + phosphate + lipid A-core oligosaccharideSide 2.. Functionally, involved in lipopolysaccharide (LPS) biosynthesis. Translocates lipid A-core from the inner to the outer leaflet of the inner membrane. Transmembrane domains (TMD) form a pore in the inner membrane and the ATP-binding domain (NBD) is responsible for energy generation. The polypeptide is ATP-dependent lipid A-core flippase (Shewanella frigidimarina (strain NCIMB 400)).